The sequence spans 471 residues: Glutamate--tRNA ligase (471 aa).

Residues 9–19 carry the 'HIGH' region motif; that stretch reads PSPTGYLHVGG. Zn(2+) is bound by residues cysteine 98, cysteine 100, cysteine 125, and aspartate 127. The short motif at 237 to 241 is the 'KMSKS' region element; that stretch reads KLSKR. Lysine 240 serves as a coordination point for ATP.

Belongs to the class-I aminoacyl-tRNA synthetase family. Glutamate--tRNA ligase type 1 subfamily. As to quaternary structure, monomer. The cofactor is Zn(2+).

The protein resides in the cytoplasm. It catalyses the reaction tRNA(Glu) + L-glutamate + ATP = L-glutamyl-tRNA(Glu) + AMP + diphosphate. Catalyzes the attachment of glutamate to tRNA(Glu) in a two-step reaction: glutamate is first activated by ATP to form Glu-AMP and then transferred to the acceptor end of tRNA(Glu). This is Glutamate--tRNA ligase from Yersinia pseudotuberculosis serotype IB (strain PB1/+).